A 74-amino-acid polypeptide reads, in one-letter code: Conotoxin Bu4 (74 aa).

Positions 1 to 22 (MKLTCVVIVAVLLLTACQLIIA) are cleaved as a signal peptide. Positions 23–45 (EDSRGTQLHRALRKATKLSVSTR) are excised as a propeptide. 3 disulfides stabilise this stretch: Cys-47–Cys-63, Cys-54–Cys-66, and Cys-62–Cys-73.

This sequence belongs to the conotoxin O1 superfamily. Expressed by the venom duct.

Its subcellular location is the secreted. This is Conotoxin Bu4 from Conus bullatus (Bubble cone).